Consider the following 253-residue polypeptide: Triosephosphate isomerase (253 aa).

9–11 (NWK) is a binding site for substrate. Histidine 94 (electrophile) is an active-site residue. Glutamate 163 functions as the Proton acceptor in the catalytic mechanism. Substrate contacts are provided by residues glycine 169, serine 209, and 230-231 (GG).

This sequence belongs to the triosephosphate isomerase family. As to quaternary structure, homodimer.

Its subcellular location is the cytoplasm. The enzyme catalyses D-glyceraldehyde 3-phosphate = dihydroxyacetone phosphate. Its pathway is carbohydrate biosynthesis; gluconeogenesis. It functions in the pathway carbohydrate degradation; glycolysis; D-glyceraldehyde 3-phosphate from glycerone phosphate: step 1/1. In terms of biological role, involved in the gluconeogenesis. Catalyzes stereospecifically the conversion of dihydroxyacetone phosphate (DHAP) to D-glyceraldehyde-3-phosphate (G3P). This Dehalococcoides mccartyi (strain ATCC BAA-2100 / JCM 16839 / KCTC 5957 / BAV1) protein is Triosephosphate isomerase.